A 281-amino-acid polypeptide reads, in one-letter code: Bifunctional protein FolD (281 aa).

NADP(+) is bound by residues 165–167, T192, and V233; that span reads GRG.

Belongs to the tetrahydrofolate dehydrogenase/cyclohydrolase family. As to quaternary structure, homodimer.

The enzyme catalyses (6R)-5,10-methylene-5,6,7,8-tetrahydrofolate + NADP(+) = (6R)-5,10-methenyltetrahydrofolate + NADPH. It carries out the reaction (6R)-5,10-methenyltetrahydrofolate + H2O = (6R)-10-formyltetrahydrofolate + H(+). It functions in the pathway one-carbon metabolism; tetrahydrofolate interconversion. Its function is as follows. Catalyzes the oxidation of 5,10-methylenetetrahydrofolate to 5,10-methenyltetrahydrofolate and then the hydrolysis of 5,10-methenyltetrahydrofolate to 10-formyltetrahydrofolate. This Mycobacterium marinum (strain ATCC BAA-535 / M) protein is Bifunctional protein FolD.